A 634-amino-acid polypeptide reads, in one-letter code: Poly(ribitol-phosphate) beta-glucosyltransferase (634 aa).

This sequence belongs to the glycosyltransferase 2 family.

The enzyme catalyses 4-O-[(D-ribitylphospho)(n)-D-ribitylphospho-(2R)-glycerylphospho]-N-acetyl-beta-D-mannosaminyl-(1-&gt;4)-N-acetyl-alpha-D-glucosaminyl di-trans,octa-cis-undecaprenyl diphosphate + n UDP-alpha-D-glucose = 4-O-[(2-beta-D-glucosyl-D-ribitylphospho)(n)-D-ribitylphospho-(2R)-glycerylphospho]-N-acetyl-beta-D-mannosaminyl-(1-&gt;4)-N-acetyl-alpha-D-glucosaminyl di-trans,octa-cis-undecaprenyl diphosphate + n UDP + n H(+). It participates in cell wall biogenesis; poly(ribitol phosphate) teichoic acid biosynthesis. In terms of biological role, attaches glucose residues to poly(RboP)-wall teichoic acids (WTAs). The protein is Poly(ribitol-phosphate) beta-glucosyltransferase of Bacillus spizizenii (strain ATCC 23059 / NRRL B-14472 / W23) (Bacillus subtilis subsp. spizizenii).